Consider the following 319-residue polypeptide: Oxaloacetate tautomerase fahd2, mitochondrial (319 aa).

The N-terminal 31 residues, 1-31 (MLTQTRVALRVLKNAHLTLPKRNISQSPALS), are a transit peptide targeting the mitochondrion. Glutamate 164, glutamate 166, and aspartate 195 together coordinate Mg(2+).

This sequence belongs to the FAH family. Requires Mg(2+) as cofactor. It depends on Mn(2+) as a cofactor.

It is found in the mitochondrion. The enzyme catalyses oxaloacetate = enol-oxaloacetate. Tautomerase that converts enol-oxaloacetate, a strong inhibitor of succinate dehydrogenase, to the physiological keto form of oxaloacetate. It is thereby required to maximize aerobic respiration efficiency by preventing succinate dehydrogenase inhibition. The protein is Oxaloacetate tautomerase fahd2, mitochondrial (fahd2) of Xenopus laevis (African clawed frog).